The primary structure comprises 521 residues: D-aminoacyl-tRNA deacylase (521 aa).

Disordered regions lie at residues Ala323–Ser353 and Val499–Ser521. Residues Val343 to Ser353 are compositionally biased toward basic and acidic residues. Over residues Ser501–Ser521 the composition is skewed to low complexity.

This sequence belongs to the DtdA deacylase family. As to quaternary structure, monomer. It depends on Zn(2+) as a cofactor.

It catalyses the reaction a D-aminoacyl-tRNA + H2O = a tRNA + a D-alpha-amino acid + H(+). It carries out the reaction glycyl-tRNA(Ala) + H2O = tRNA(Ala) + glycine + H(+). In terms of biological role, D-aminoacyl-tRNA deacylase with broad substrate specificity. By recycling D-aminoacyl-tRNA to D-amino acids and free tRNA molecules, this enzyme counteracts the toxicity associated with the formation of D-aminoacyl-tRNA entities in vivo. This chain is D-aminoacyl-tRNA deacylase, found in Haloquadratum walsbyi (strain DSM 16790 / HBSQ001).